A 610-amino-acid chain; its full sequence is Elongation factor 4 (610 aa).

One can recognise a tr-type G domain in the interval 12–194 (EKIRNFSIIA…QIVEKVPAPQ (183 aa)). Residues 24 to 29 (DHGKST) and 141 to 144 (NKID) each bind GTP.

The protein belongs to the TRAFAC class translation factor GTPase superfamily. Classic translation factor GTPase family. LepA subfamily.

It is found in the cell membrane. It catalyses the reaction GTP + H2O = GDP + phosphate + H(+). Required for accurate and efficient protein synthesis under certain stress conditions. May act as a fidelity factor of the translation reaction, by catalyzing a one-codon backward translocation of tRNAs on improperly translocated ribosomes. Back-translocation proceeds from a post-translocation (POST) complex to a pre-translocation (PRE) complex, thus giving elongation factor G a second chance to translocate the tRNAs correctly. Binds to ribosomes in a GTP-dependent manner. In Streptococcus thermophilus (strain ATCC BAA-250 / LMG 18311), this protein is Elongation factor 4.